The following is a 276-amino-acid chain: Diaminopimelate epimerase (276 aa).

Residues Asn-13, Gln-46, and Asn-66 each coordinate substrate. The active-site Proton donor is the Cys-75. Substrate is bound by residues 76–77 (GN), Asn-159, Asn-192, and 210–211 (ER). Catalysis depends on Cys-219, which acts as the Proton acceptor. 220–221 (GT) provides a ligand contact to substrate.

This sequence belongs to the diaminopimelate epimerase family. As to quaternary structure, homodimer.

The protein localises to the cytoplasm. The enzyme catalyses (2S,6S)-2,6-diaminopimelate = meso-2,6-diaminopimelate. The protein operates within amino-acid biosynthesis; L-lysine biosynthesis via DAP pathway; DL-2,6-diaminopimelate from LL-2,6-diaminopimelate: step 1/1. Functionally, catalyzes the stereoinversion of LL-2,6-diaminopimelate (L,L-DAP) to meso-diaminopimelate (meso-DAP), a precursor of L-lysine and an essential component of the bacterial peptidoglycan. The sequence is that of Diaminopimelate epimerase from Tolumonas auensis (strain DSM 9187 / NBRC 110442 / TA 4).